Here is a 319-residue protein sequence, read N- to C-terminus: ATP-dependent 6-phosphofructokinase (319 aa).

Glycine 11 contacts ATP. 21-25 (RAVVR) serves as a coordination point for ADP. Residues 72 to 73 (RC) and 102 to 105 (GDGS) contribute to the ATP site. Residue aspartate 103 participates in Mg(2+) binding. 125–127 (TID) contributes to the substrate binding site. Aspartate 127 acts as the Proton acceptor in catalysis. Arginine 154 is an ADP binding site. Substrate contacts are provided by residues arginine 162 and 169 to 171 (MGR). ADP is bound by residues 185 to 187 (GAE), arginine 211, and 213 to 215 (KKH). Residues glutamate 222, arginine 243, and 249–252 (HIQR) each bind substrate.

This sequence belongs to the phosphofructokinase type A (PFKA) family. ATP-dependent PFK group I subfamily. Prokaryotic clade 'B1' sub-subfamily. As to quaternary structure, homotetramer. Mg(2+) is required as a cofactor.

It localises to the cytoplasm. The enzyme catalyses beta-D-fructose 6-phosphate + ATP = beta-D-fructose 1,6-bisphosphate + ADP + H(+). The protein operates within carbohydrate degradation; glycolysis; D-glyceraldehyde 3-phosphate and glycerone phosphate from D-glucose: step 3/4. Allosterically activated by ADP and other diphosphonucleosides, and allosterically inhibited by phosphoenolpyruvate. Catalyzes the phosphorylation of D-fructose 6-phosphate to fructose 1,6-bisphosphate by ATP, the first committing step of glycolysis. The chain is ATP-dependent 6-phosphofructokinase from Bacillus licheniformis (strain ATCC 14580 / DSM 13 / JCM 2505 / CCUG 7422 / NBRC 12200 / NCIMB 9375 / NCTC 10341 / NRRL NRS-1264 / Gibson 46).